Consider the following 387-residue polypeptide: O-methyltransferase lepI (387 aa).

A substrate-binding site is contributed by 135 to 148 (FENLWPVLMALPDF). Residues 175–195 (CFHWLATQPTRIANFKVLLTD) are substrate binding. Residues 227–228 (GG), aspartate 252, 275–276 (NF), and arginine 291 contribute to the S-adenosyl-L-methionine site.

It belongs to the class I-like SAM-binding methyltransferase superfamily. Cation-independent O-methyltransferase family.

Its function is as follows. O-methyltransferase; part of the gene cluster 23 that mediates the biosynthesis of a family of 2-pyridones known as leporins. The hybrid PKS-NRPS synthetase lepA and the enoyl reductase lepG are responsible for fusion of phenylalanine with a hexaketide and subsequent release of the stable tetramic acid precursor, pre-leporin C. Because lepA lacks a designated enoylreductase (ER) domain, the required activity is provided the enoyl reductase lepG. It is possible that the dehydrogenase lepF also participates in production of pre-leporin C. Cytochrome P450 monooxygenase lepH is then required for the ring expansion step to yield leporin C. Leporin C is then presumably further oxidized by the N-hydroxylase lepD to form leporin B. LepI may possess a function in biosynthesis upstream of lepA. Leporin B is further oxidized in the presence of ferric ion to give the leporin B trimer-iron chelate, but whether or not this reaction is catalyzed by an enzyme in the pathway or by ferric ion is not determined yet. This Aspergillus flavus (strain ATCC 200026 / FGSC A1120 / IAM 13836 / NRRL 3357 / JCM 12722 / SRRC 167) protein is O-methyltransferase lepI.